The primary structure comprises 977 residues: Zinc finger CCCH domain-containing protein 7B (977 aa).

3 TPR repeats span residues 1-27 (MERQ…KQEE), 36-69 (VQNL…ADYA), and 82-115 (CKLH…DSES). Ser-217 carries the post-translational modification Phosphoserine. Residues 248 to 256 (STDSLDDFS) carry the LD motif; interaction with NSP3 motif. 2 positions are modified to phosphoserine: Ser-364 and Ser-367. Positions 365 to 403 (FGSTRGSLDKPDSFMEETNSQDHRPPSGAQKPAPSPEPC) are disordered. 3 consecutive C3H1-type zinc fingers follow at residues 484 to 508 (LCKD…HQEE), 616 to 638 (VCRH…HSFI), and 754 to 782 (PQQY…HSPE). The segment at 842 to 866 (YHCWLCGKNSNSKKQWQQHIQSEKH) adopts a C2H2-type zinc-finger fold. The C3H1-type 4 zinc finger occupies 886–914 (MGEFRLCDRLQKGKACPDGDKCRCAHGQE).

As to quaternary structure, (Microbial infection) Interacts (via LD motif) with rotavirus A NSP3 (via the coiled-coil region).

It localises to the nucleus. In terms of biological role, may be a specific regulator of miRNA biogenesis. Binds to microRNAs MIR7-1, MIR16-2 and MIR29A hairpins recognizing the 'ATA(A/T)' motif in the apical loop. This chain is Zinc finger CCCH domain-containing protein 7B (ZC3H7B), found in Homo sapiens (Human).